The chain runs to 508 residues: Aldehyde dehydrogenase family 7 member A1 (508 aa).

244 to 249 (GSSKVG) lines the NAD(+) pocket. Catalysis depends on E266, which acts as the Proton acceptor. Catalysis depends on C300, which acts as the Nucleophile.

It belongs to the aldehyde dehydrogenase family. In terms of assembly, homotetramer.

It catalyses the reaction an aldehyde + NAD(+) + H2O = a carboxylate + NADH + 2 H(+). This Pisum sativum (Garden pea) protein is Aldehyde dehydrogenase family 7 member A1.